The primary structure comprises 451 residues: MKHVKNFENKKVLVLGLARSGEAAARLLAKLGAIVTVNDGKPFDENPSAQALLEEGIKVICGSHPLELLDEAFAYMVKNPGIPYTNPMVVRALEKNIPVITEVELAYLISEAPIIGITGSNGKTTTTTMIADVLNHAGQSARLSGNIGFPASEVAQPVTEKDILVMELSSFQLMGTESFHPHMAVITNLMPTHIDYHGSFENYIEAKWNIQKNMTKEDFLVLNFNQDLAKDLANQTQAKIIPFSTKEKVDGAYLDGQMLCFKGQAIMSASELGVPGSHNVENALATIAVAKLSGVSNEAIRETLIHFGGVKHRLQSLGNIAGVKFYNDSKSTNILATQKALSGFDNSKVILIAGGLDRGNEFDELVPDIKGLKKMIILGESAPRLKHAAVQAGVTYLNAKDVAQATRIAFQEASPGDVVLLSPANASWDMYKNFEVRGDEFITTFKSLKGE.

Residue 119-125 (GSNGKTT) coordinates ATP.

This sequence belongs to the MurCDEF family.

Its subcellular location is the cytoplasm. It carries out the reaction UDP-N-acetyl-alpha-D-muramoyl-L-alanine + D-glutamate + ATP = UDP-N-acetyl-alpha-D-muramoyl-L-alanyl-D-glutamate + ADP + phosphate + H(+). Its pathway is cell wall biogenesis; peptidoglycan biosynthesis. Functionally, cell wall formation. Catalyzes the addition of glutamate to the nucleotide precursor UDP-N-acetylmuramoyl-L-alanine (UMA). The polypeptide is UDP-N-acetylmuramoylalanine--D-glutamate ligase (Streptococcus mutans serotype c (strain ATCC 700610 / UA159)).